The sequence spans 501 residues: MANIGKITQIIGPVVDVGFEGEYALPQILDALEVTRPDGQKVILECQQHLGEDRVRTIAMDSTDGLTRGMEVKTYGMPISMPVGEDIRGRLYNVVGDAIDGIPSGVAANRMSIHRQAPKFEDLSTNTEVLFTGIKVIDLLEPYVKGGKIGLFGGAGVGKTVLIMELINNIAKAYAGLSVFAGVGERTREGNDLLREMIESNVIRYGDEFKHSMEKGEWDLSKVDATELLKSQATLVFGQMNEPPGARARVALAGLTVAEYFRDGDGQGQGRDILFFIDNIFRFTQAGSEVSALLGRMPSAVGYQPTLATEMGAMQERITSTKRGSITSVQAVYVPADDLTDPAPATTFAHLDATTVLNRKISELGIYPAVDPLDSTSRILSPEILGSEHYDCAQRVKEILQRYKELQDIIAILGMDELSEEDKQAVHRARRVQRFLSQPFHVAEQFTGLKGELVNIKDTIKGFNMIMDGALDHLPEAAFNLVGSIEQAIAKGEKLVADSKK.

G153 to T160 is an ATP binding site.

Belongs to the ATPase alpha/beta chains family. In terms of assembly, F-type ATPases have 2 components, CF(1) - the catalytic core - and CF(0) - the membrane proton channel. CF(1) has five subunits: alpha(3), beta(3), gamma(1), delta(1), epsilon(1). CF(0) has three main subunits: a(1), b(2) and c(9-12). The alpha and beta chains form an alternating ring which encloses part of the gamma chain. CF(1) is attached to CF(0) by a central stalk formed by the gamma and epsilon chains, while a peripheral stalk is formed by the delta and b chains.

The protein resides in the cell inner membrane. It catalyses the reaction ATP + H2O + 4 H(+)(in) = ADP + phosphate + 5 H(+)(out). Its function is as follows. Produces ATP from ADP in the presence of a proton gradient across the membrane. The catalytic sites are hosted primarily by the beta subunits. This chain is ATP synthase subunit beta, found in Cytophaga hutchinsonii (strain ATCC 33406 / DSM 1761 / CIP 103989 / NBRC 15051 / NCIMB 9469 / D465).